A 116-amino-acid polypeptide reads, in one-letter code: Large ribosomal subunit protein uL24 (116 aa).

Residues 1–27 (MAGRKSSTPTRHKMHVKTGDTVQVISG) are disordered.

It belongs to the universal ribosomal protein uL24 family. In terms of assembly, part of the 50S ribosomal subunit.

Functionally, one of two assembly initiator proteins, it binds directly to the 5'-end of the 23S rRNA, where it nucleates assembly of the 50S subunit. One of the proteins that surrounds the polypeptide exit tunnel on the outside of the subunit. The protein is Large ribosomal subunit protein uL24 of Picosynechococcus sp. (strain ATCC 27264 / PCC 7002 / PR-6) (Agmenellum quadruplicatum).